The chain runs to 274 residues: Diaminopimelate epimerase (274 aa).

Positions 11, 44, and 64 each coordinate substrate. Catalysis depends on C73, which acts as the Proton donor. Residues 74 to 75 (GN), N157, N190, and 208 to 209 (ER) contribute to the substrate site. The Proton acceptor role is filled by C217. 218–219 (GS) is a binding site for substrate.

The protein belongs to the diaminopimelate epimerase family. In terms of assembly, homodimer.

The protein localises to the cytoplasm. It catalyses the reaction (2S,6S)-2,6-diaminopimelate = meso-2,6-diaminopimelate. It participates in amino-acid biosynthesis; L-lysine biosynthesis via DAP pathway; DL-2,6-diaminopimelate from LL-2,6-diaminopimelate: step 1/1. In terms of biological role, catalyzes the stereoinversion of LL-2,6-diaminopimelate (L,L-DAP) to meso-diaminopimelate (meso-DAP), a precursor of L-lysine and an essential component of the bacterial peptidoglycan. In Actinobacillus pleuropneumoniae serotype 7 (strain AP76), this protein is Diaminopimelate epimerase.